We begin with the raw amino-acid sequence, 564 residues long: Eukaryotic translation initiation factor 3 subunit L (564 aa).

S2 carries the post-translational modification N-acetylserine. The PCI domain maps to 331–537 (DAIRVFANIL…IHIADTKVAR (207 aa)). An N6-acetyllysine mark is found at K465 and K549.

It belongs to the eIF-3 subunit L family. In terms of assembly, component of the eukaryotic translation initiation factor 3 (eIF-3) complex, which is composed of 13 subunits: EIF3A, EIF3B, EIF3C, EIF3D, EIF3E, EIF3F, EIF3G, EIF3H, EIF3I, EIF3J, EIF3K, EIF3L and EIF3M. The eIF-3 complex appears to include 3 stable modules: module A is composed of EIF3A, EIF3B, EIF3G and EIF3I; module B is composed of EIF3F, EIF3H, and EIF3M; and module C is composed of EIF3C, EIF3D, EIF3E, EIF3K and EIF3L. EIF3C of module C binds EIF3B of module A and EIF3H of module B, thereby linking the three modules. EIF3J is a labile subunit that binds to the eIF-3 complex via EIF3B. The eIF-3 complex may interact with RPS6KB1 under conditions of nutrient depletion. Mitogenic stimulation may lead to binding and activation of a complex composed of MTOR and RPTOR, leading to phosphorylation and release of RPS6KB1 and binding of EIF4B to eIF-3. Interacts with RRN3.

Its subcellular location is the cytoplasm. In terms of biological role, component of the eukaryotic translation initiation factor 3 (eIF-3) complex, which is required for several steps in the initiation of protein synthesis. The eIF-3 complex associates with the 40S ribosome and facilitates the recruitment of eIF-1, eIF-1A, eIF-2:GTP:methionyl-tRNAi and eIF-5 to form the 43S pre-initiation complex (43S PIC). The eIF-3 complex stimulates mRNA recruitment to the 43S PIC and scanning of the mRNA for AUG recognition. The eIF-3 complex is also required for disassembly and recycling of post-termination ribosomal complexes and subsequently prevents premature joining of the 40S and 60S ribosomal subunits prior to initiation. The eIF-3 complex specifically targets and initiates translation of a subset of mRNAs involved in cell proliferation, including cell cycling, differentiation and apoptosis, and uses different modes of RNA stem-loop binding to exert either translational activation or repression. This chain is Eukaryotic translation initiation factor 3 subunit L (Eif3l), found in Mus musculus (Mouse).